A 149-amino-acid polypeptide reads, in one-letter code: uncharacterized protein (149 aa).

This is an uncharacterized protein from Mycoplasma pneumoniae (strain ATCC 29342 / M129 / Subtype 1) (Mycoplasmoides pneumoniae).